The sequence spans 309 residues: Taste receptor type 2 member 124 (309 aa).

Over 1–7 the chain is Extracellular; sequence MVPVLHS. The chain crosses the membrane as a helical span at residues 8–28; the sequence is LSTIILIAEFVWGNLSNGLIV. The Cytoplasmic segment spans residues 29-46; the sequence is LKNCIDWINKKELSTVDQ. A helical transmembrane segment spans residues 47–67; it reads ILIVLAISRISLIWETLIIWV. The Extracellular segment spans residues 68 to 86; the sequence is KDQLISSITIEELKIIVFS. The helical transmembrane segment at 87-107 threads the bilayer; that stretch reads FILSSHFSLWLATALSIFYLF. Residues 108 to 127 are Cytoplasmic-facing; sequence RIPNCYWQIFLYLKWRIKQL. A helical membrane pass occupies residues 128-148; sequence IVHMLLGSLVFLVANMIQITI. The Extracellular segment spans residues 149–183; it reads TLEERFYQYGGNTSVNSMETEFSILIELMLFNMTM. 2 N-linked (GlcNAc...) asparagine glycosylation sites follow: asparagine 160 and asparagine 180. A helical membrane pass occupies residues 184 to 204; that stretch reads FSIIPFSLALISFLLLIFSLW. At 205 to 230 the chain is on the cytoplasmic side; sequence KHLQKMPLNSRGDRDPSATAHRNALR. The helical transmembrane segment at 231 to 251 threads the bilayer; that stretch reads ILVSFLLLYTIYFLSLLISWV. At 252 to 261 the chain is on the extracellular side; that stretch reads AQKNQSELVH. An N-linked (GlcNAc...) asparagine glycan is attached at asparagine 255. The chain crosses the membrane as a helical span at residues 262 to 282; the sequence is IICMITSLVYPSFHSYILILG. At 283 to 309 the chain is on the cytoplasmic side; it reads NYKLKQTSLWVMRQLGCRMKRQNTPTT.

This sequence belongs to the G-protein coupled receptor T2R family.

The protein localises to the membrane. In terms of biological role, putative taste receptor which may play a role in the perception of bitterness. This is Taste receptor type 2 member 124 from Mus musculus (Mouse).